A 292-amino-acid polypeptide reads, in one-letter code: uncharacterized protein (292 aa).

Residues 13-35 form a helical membrane-spanning segment; it reads LFILFIIVVCIYLLPRVAINAFY.

It belongs to the serine esterase family.

It is found in the membrane. This is an uncharacterized protein from Salmonella typhimurium (strain LT2 / SGSC1412 / ATCC 700720).